The chain runs to 145 residues: Small ribosomal subunit protein eS19 (145 aa).

A disordered region spans residues 120 to 145; it reads GGRRISENGQRDLDRIAAQTLEEDDE. The segment covering 123-134 has biased composition (basic and acidic residues); the sequence is RISENGQRDLDR.

Belongs to the eukaryotic ribosomal protein eS19 family. In terms of assembly, component of the small ribosomal subunit. Mature ribosomes consist of a small (40S) and a large (60S) subunit. The 40S subunit contains about 32 different proteins and 1 molecule of RNA (18S). The 60S subunit contains 45 different proteins and 3 molecules of RNA (25S, 5.8S and 5S).

It is found in the cytoplasm. Its function is as follows. Component of the ribosome, a large ribonucleoprotein complex responsible for the synthesis of proteins in the cell. The small ribosomal subunit (SSU) binds messenger RNAs (mRNAs) and translates the encoded message by selecting cognate aminoacyl-transfer RNA (tRNA) molecules. The large subunit (LSU) contains the ribosomal catalytic site termed the peptidyl transferase center (PTC), which catalyzes the formation of peptide bonds, thereby polymerizing the amino acids delivered by tRNAs into a polypeptide chain. The nascent polypeptides leave the ribosome through a tunnel in the LSU and interact with protein factors that function in enzymatic processing, targeting, and the membrane insertion of nascent chains at the exit of the ribosomal tunnel. RPS19A is required for proper maturation of the small (40S) ribosomal subunit. The chain is Small ribosomal subunit protein eS19 (RPS19A) from Candida albicans (strain SC5314 / ATCC MYA-2876) (Yeast).